The following is a 506-amino-acid chain: ATP synthase subunit alpha (506 aa).

Position 170–177 (170–177 (GDRQTGKT)) interacts with ATP.

The protein belongs to the ATPase alpha/beta chains family. As to quaternary structure, F-type ATPases have 2 components, CF(1) - the catalytic core - and CF(0) - the membrane proton channel. CF(1) has five subunits: alpha(3), beta(3), gamma(1), delta(1), epsilon(1). CF(0) has four main subunits: a(1), b(1), b'(1) and c(9-12).

The protein resides in the cellular thylakoid membrane. It catalyses the reaction ATP + H2O + 4 H(+)(in) = ADP + phosphate + 5 H(+)(out). Produces ATP from ADP in the presence of a proton gradient across the membrane. The alpha chain is a regulatory subunit. The protein is ATP synthase subunit alpha of Synechococcus sp. (strain CC9311).